A 904-amino-acid polypeptide reads, in one-letter code: Conserved oligomeric Golgi complex subunit 2 (904 aa).

Disordered regions lie at residues 384-424 and 644-669; these read KEKQ…INNN and IKIT…LNNK. 2 stretches are compositionally biased toward low complexity: residues 388–424 and 652–663; these read SNNN…INNN and PSLSNQSPISSS.

The protein belongs to the COG2 family. In terms of assembly, component of the conserved oligomeric Golgi complex which is composed of eight different subunits and is required for normal Golgi morphology and localization.

Its subcellular location is the golgi apparatus membrane. In terms of biological role, required for normal Golgi function. In Dictyostelium discoideum (Social amoeba), this protein is Conserved oligomeric Golgi complex subunit 2 (cog2).